The chain runs to 124 residues: Holo-[acyl-carrier-protein] synthase (124 aa).

Positions 8 and 60 each coordinate Mg(2+).

This sequence belongs to the P-Pant transferase superfamily. AcpS family. Requires Mg(2+) as cofactor.

It localises to the cytoplasm. It catalyses the reaction apo-[ACP] + CoA = holo-[ACP] + adenosine 3',5'-bisphosphate + H(+). Transfers the 4'-phosphopantetheine moiety from coenzyme A to a Ser of acyl-carrier-protein. The chain is Holo-[acyl-carrier-protein] synthase from Wolbachia pipientis subsp. Culex pipiens (strain wPip).